Consider the following 131-residue polypeptide: Serum amyloid A-3 protein (131 aa).

An N-terminal signal peptide occupies residues 1–18 (MNLSTGIIFCFLILGVSS). The span at 94 to 105 (MTRDQVREDSKA) shows a compositional bias: basic and acidic residues. Residues 94-131 (MTRDQVREDSKADQFANEWGRSGKDPNHFRPAGLPDKY) form a disordered region.

The protein belongs to the SAA family. Expressed in the liver. Expressed in mammary epithelial cells. Expressed at high levels in mammary ductal cells and vesicle engorged alveoli, but absent from stromal and connective tissue and leukocytes. Secreted into colostrum and mastitic milk (at protein level). Low expression levels, if any, in normal milk (at protein level).

The protein resides in the secreted. In terms of biological role, major acute phase reactant. Apolipoprotein of the HDL complex. May have a role in protection of the mammary gland during remodeling and infection. In vitro exhibits antimicrobial activity against Escherichia coli, Streptococcus uberis and Pseudomonas aeruginosa. This chain is Serum amyloid A-3 protein (SAA3), found in Bos taurus (Bovine).